The following is a 370-amino-acid chain: 4-hydroxy-3-methylbut-2-en-1-yl diphosphate synthase (flavodoxin) (370 aa).

4 residues coordinate [4Fe-4S] cluster: cysteine 270, cysteine 273, cysteine 305, and glutamate 312.

Belongs to the IspG family. It depends on [4Fe-4S] cluster as a cofactor.

It carries out the reaction (2E)-4-hydroxy-3-methylbut-2-enyl diphosphate + oxidized [flavodoxin] + H2O + 2 H(+) = 2-C-methyl-D-erythritol 2,4-cyclic diphosphate + reduced [flavodoxin]. Its pathway is isoprenoid biosynthesis; isopentenyl diphosphate biosynthesis via DXP pathway; isopentenyl diphosphate from 1-deoxy-D-xylulose 5-phosphate: step 5/6. Its function is as follows. Converts 2C-methyl-D-erythritol 2,4-cyclodiphosphate (ME-2,4cPP) into 1-hydroxy-2-methyl-2-(E)-butenyl 4-diphosphate. In Ectopseudomonas mendocina (strain ymp) (Pseudomonas mendocina), this protein is 4-hydroxy-3-methylbut-2-en-1-yl diphosphate synthase (flavodoxin).